The primary structure comprises 458 residues: Retinoic acid receptor alpha (458 aa).

The interval 1-87 (MSSKDNTCPP…PPPLPRIYKP (87 aa)) is modulating. The segment at 39 to 78 (GGLPGVQHQPPLSGYSTPSPATIETQSTSSEEIVPSPPTP) is disordered. Residues 52–69 (GYSTPSPATIETQSTSSE) show a composition bias toward polar residues. 2 NR C4-type zinc fingers span residues 88 to 108 (CFVC…CEGC) and 124 to 148 (CHRD…LQKC). Positions 88-153 (CFVCQDKSSG…RLQKCFEVGM (66 aa)) form a DNA-binding region, nuclear receptor. The hinge stretch occupies residues 154–182 (SKESVRNDRNKKKKESPKPEAIESYILSP). Positions 183 to 417 (ETQDLIEKVQ…LIQEMLENSE (235 aa)) constitute an NR LBD domain. Positions 407 to 415 (PLIQEMLEN) match the 9aaTAD motif. The tract at residues 419-458 (LDTLGGGASSDAPVTPVAPGSCSPSLSPSSTHSSPSTHSP) is disordered. Residues 439–458 (SCSPSLSPSSTHSSPSTHSP) are compositionally biased toward low complexity.

This sequence belongs to the nuclear hormone receptor family. NR1 subfamily. In terms of assembly, heterodimer; with an rxr molecule. Binds DNA preferentially as a rar/rxr heterodimer.

It localises to the nucleus. Its function is as follows. Receptor for retinoic acid. Retinoic acid receptors bind as heterodimers to their target response elements in response to their ligands, all-trans or 9-cis retinoic acid, and regulate gene expression in various biological processes. The rar/rxr heterodimers bind to the retinoic acid response elements (RARE) composed of tandem 5'-AGGTCA-3' sites known as DR1-DR5. Required for primary neurogenesis and for anteroposterior neural patterning. This Xenopus laevis (African clawed frog) protein is Retinoic acid receptor alpha (rara).